Reading from the N-terminus, the 630-residue chain is Sorting nexin-4 (630 aa).

Composition is skewed to polar residues over residues 1–11 (MSSEDQFTSIQ) and 19–28 (NTNNTPTDTT). The disordered stretch occupies residues 1–143 (MSSEDQFTSI…QQPQQQLASI (143 aa)). Residues 32 to 49 (KSSKSKKSKKSSSKKKNG) are compositionally biased toward basic residues. Residues 50–60 (NKISPSSTTET) show a composition bias toward low complexity. The segment covering 81 to 94 (DDNHEVDDGNKEQN) has biased composition (basic and acidic residues). Residues 130-143 (QQQLQQPQQQLASI) show a composition bias toward low complexity. Residues 187–321 (SIKTTVTHPN…HLFISNSNDW (135 aa)) form the PX domain. Positions 243, 269, and 288 each coordinate a 1,2-diacyl-sn-glycero-3-phospho-(1D-myo-inositol-3-phosphate). Coiled coils occupy residues 361 to 413 (SKHK…SNQI) and 550 to 581 (TIKS…INEE).

It belongs to the sorting nexin family.

It is found in the cytoplasm. The protein localises to the cytosol. It localises to the preautophagosomal structure membrane. Its subcellular location is the endosome membrane. Sorting nexin, involved in the separation or division of vacuoles throughout the entire life cycle of the cells. Involved in retrieval of late-Golgi SNAREs from post-Golgi endosomes to the trans-Golgi network, for cytoplasm to vacuole transport (Cvt), and autophagy of large cargos including mitophagy, pexophagy and glycophagy. This chain is Sorting nexin-4 (SNX4), found in Candida albicans (strain SC5314 / ATCC MYA-2876) (Yeast).